A 352-amino-acid chain; its full sequence is Holliday junction branch migration complex subunit RuvB (352 aa).

The tract at residues 4–185 (PDRLISAVSG…FGIVQRLEFY (182 aa)) is large ATPase domain (RuvB-L). Residues Ile24, Arg25, Gly66, Lys69, Thr70, Thr71, 132–134 (EDF), Arg175, Tyr185, and Arg222 each bind ATP. Thr70 is a binding site for Mg(2+). Residues 186 to 256 (NVEDLATIVS…IADKALNLLD (71 aa)) form a small ATPAse domain (RuvB-S) region. The interval 259–352 (ERGFDHLDRR…TDLFTSEDGN (94 aa)) is head domain (RuvB-H). Arg295, Arg314, and Arg319 together coordinate DNA.

The protein belongs to the RuvB family. As to quaternary structure, homohexamer. Forms an RuvA(8)-RuvB(12)-Holliday junction (HJ) complex. HJ DNA is sandwiched between 2 RuvA tetramers; dsDNA enters through RuvA and exits via RuvB. An RuvB hexamer assembles on each DNA strand where it exits the tetramer. Each RuvB hexamer is contacted by two RuvA subunits (via domain III) on 2 adjacent RuvB subunits; this complex drives branch migration. In the full resolvosome a probable DNA-RuvA(4)-RuvB(12)-RuvC(2) complex forms which resolves the HJ.

The protein localises to the cytoplasm. It carries out the reaction ATP + H2O = ADP + phosphate + H(+). Functionally, the RuvA-RuvB-RuvC complex processes Holliday junction (HJ) DNA during genetic recombination and DNA repair, while the RuvA-RuvB complex plays an important role in the rescue of blocked DNA replication forks via replication fork reversal (RFR). RuvA specifically binds to HJ cruciform DNA, conferring on it an open structure. The RuvB hexamer acts as an ATP-dependent pump, pulling dsDNA into and through the RuvAB complex. RuvB forms 2 homohexamers on either side of HJ DNA bound by 1 or 2 RuvA tetramers; 4 subunits per hexamer contact DNA at a time. Coordinated motions by a converter formed by DNA-disengaged RuvB subunits stimulates ATP hydrolysis and nucleotide exchange. Immobilization of the converter enables RuvB to convert the ATP-contained energy into a lever motion, pulling 2 nucleotides of DNA out of the RuvA tetramer per ATP hydrolyzed, thus driving DNA branch migration. The RuvB motors rotate together with the DNA substrate, which together with the progressing nucleotide cycle form the mechanistic basis for DNA recombination by continuous HJ branch migration. Branch migration allows RuvC to scan DNA until it finds its consensus sequence, where it cleaves and resolves cruciform DNA. This is Holliday junction branch migration complex subunit RuvB from Pseudomonas aeruginosa (strain LESB58).